The primary structure comprises 571 residues: Proline--tRNA ligase (571 aa).

Belongs to the class-II aminoacyl-tRNA synthetase family. ProS type 1 subfamily. As to quaternary structure, homodimer.

The protein resides in the cytoplasm. The catalysed reaction is tRNA(Pro) + L-proline + ATP = L-prolyl-tRNA(Pro) + AMP + diphosphate. Its function is as follows. Catalyzes the attachment of proline to tRNA(Pro) in a two-step reaction: proline is first activated by ATP to form Pro-AMP and then transferred to the acceptor end of tRNA(Pro). As ProRS can inadvertently accommodate and process non-cognate amino acids such as alanine and cysteine, to avoid such errors it has two additional distinct editing activities against alanine. One activity is designated as 'pretransfer' editing and involves the tRNA(Pro)-independent hydrolysis of activated Ala-AMP. The other activity is designated 'posttransfer' editing and involves deacylation of mischarged Ala-tRNA(Pro). The misacylated Cys-tRNA(Pro) is not edited by ProRS. This is Proline--tRNA ligase from Shewanella baltica (strain OS185).